We begin with the raw amino-acid sequence, 159 residues long: Ribosomal RNA large subunit methyltransferase H (159 aa).

S-adenosyl-L-methionine contacts are provided by residues L76, G108, and 127-132 (FSKMTF).

It belongs to the RNA methyltransferase RlmH family. Homodimer.

It is found in the cytoplasm. The enzyme catalyses pseudouridine(1915) in 23S rRNA + S-adenosyl-L-methionine = N(3)-methylpseudouridine(1915) in 23S rRNA + S-adenosyl-L-homocysteine + H(+). Functionally, specifically methylates the pseudouridine at position 1915 (m3Psi1915) in 23S rRNA. The polypeptide is Ribosomal RNA large subunit methyltransferase H (Staphylococcus haemolyticus (strain JCSC1435)).